The chain runs to 582 residues: Protein LYRIC (582 aa).

The Lumenal portion of the chain corresponds to 1 to 48 (MAARSWQDELAQQAEEGSARLREMLSVGLGFLRTELGLDLGLEPKRYP). The tract at residues 1–71 (MAARSWQDEL…LLLFLLGYGW (71 aa)) is activation of NF-kappa-B. A helical transmembrane segment spans residues 49–69 (GWVILVGTGALGLLLLFLLGY). Topologically, residues 70 to 582 (GWAAACAGAR…KKKKKARRET (513 aa)) are cytoplasmic. The tract at residues 72–169 (AAACAGARKK…EKSKKNKKKS (98 aa)) is interaction with BCCIP. The disordered stretch occupies residues 78 to 222 (ARKKRRSPPR…DSGSLDSTIP (145 aa)). The segment covering 93-106 (AAVPAAAPDDLALL) has biased composition (low complexity). Positions 101–205 (DDLALLKNLR…ISHREKRQQR (105 aa)) are interaction with RELA. A compositionally biased stretch (basic and acidic residues) spans 109-127 (LRSEEQKKKNRKKLSEKPK). Threonine 143 carries the post-translational modification Phosphothreonine. Basic residues predominate over residues 160 to 169 (EKSKKNKKKS). Serine 180 carries the phosphoserine modification. The segment covering 198-208 (HREKRQQRKRD) has biased composition (basic residues). 2 positions are modified to phosphoserine: serine 216 and serine 251. The residue at position 264 (lysine 264) is an N6-acetyllysine. The interval 280-582 (TVNGGGWNEK…KKKKKARRET (303 aa)) is disordered. A phosphoserine mark is found at serine 298, serine 306, serine 308, serine 311, serine 323, serine 339, serine 344, and serine 369. Over residues 320-333 (SAWSQDTGDANTNG) the composition is skewed to polar residues. Polar residues-rich tracts occupy residues 354–372 (EPVS…SRNQ) and 383–394 (NGLSSADPNSDW). Positions 381–443 (GLNGLSSADP…EGALPTGKSK (63 aa)) are lung-homing for mammary tumors. A phosphoserine mark is found at serine 415 and serine 426. Positions 421–434 (DDQKVSDDDKEKGE) are enriched in basic and acidic residues. A compositionally biased stretch (basic residues) spans 441 to 451 (KSKKKKKKKKK). Phosphoserine is present on serine 457. Phosphothreonine is present on threonine 458. Residues serine 478, serine 494, and serine 496 each carry the phosphoserine modification. Composition is skewed to polar residues over residues 504–520 (KNSQ…STEP) and 549–568 (NTKQ…SWES). At serine 568 the chain carries Phosphoserine. Residues 571–582 (QIKKKKKARRET) are compositionally biased toward basic residues.

As to quaternary structure, interacts with BCCIP, CREBBP/CBP and RELA/p65. Widely expressed with highest levels in muscle-dominating organs such as skeletal muscle, heart, tongue and small intestine and in endocrine glands such as thyroid and adrenal gland. Overexpressed in various cancers including breast, brain, prostate, melanoma and glioblastoma multiforme.

Its subcellular location is the endoplasmic reticulum membrane. The protein resides in the nucleus membrane. It is found in the cell junction. It localises to the tight junction. The protein localises to the nucleus. Its subcellular location is the nucleolus. The protein resides in the cytoplasm. It is found in the perinuclear region. In terms of biological role, down-regulates SLC1A2/EAAT2 promoter activity when expressed ectopically. Activates the nuclear factor kappa-B (NF-kappa-B) transcription factor. Promotes anchorage-independent growth of immortalized melanocytes and astrocytes which is a key component in tumor cell expansion. Promotes lung metastasis and also has an effect on bone and brain metastasis, possibly by enhancing the seeding of tumor cells to the target organ endothelium. Induces chemoresistance. The sequence is that of Protein LYRIC (MTDH) from Homo sapiens (Human).